The chain runs to 258 residues: Ubiquinone/menaquinone biosynthesis C-methyltransferase UbiE (258 aa).

Residues 1–20 are disordered; sequence MSESRTSADGGMETSYGFRE. Residues T81, D102, and 130–131 each bind S-adenosyl-L-methionine; that span reads NA.

It belongs to the class I-like SAM-binding methyltransferase superfamily. MenG/UbiE family.

The catalysed reaction is a 2-demethylmenaquinol + S-adenosyl-L-methionine = a menaquinol + S-adenosyl-L-homocysteine + H(+). It catalyses the reaction a 2-methoxy-6-(all-trans-polyprenyl)benzene-1,4-diol + S-adenosyl-L-methionine = a 5-methoxy-2-methyl-3-(all-trans-polyprenyl)benzene-1,4-diol + S-adenosyl-L-homocysteine + H(+). It participates in quinol/quinone metabolism; menaquinone biosynthesis; menaquinol from 1,4-dihydroxy-2-naphthoate: step 2/2. The protein operates within cofactor biosynthesis; ubiquinone biosynthesis. Its function is as follows. Methyltransferase required for the conversion of demethylmenaquinol (DMKH2) to menaquinol (MKH2) and the conversion of 2-polyprenyl-6-methoxy-1,4-benzoquinol (DDMQH2) to 2-polyprenyl-3-methyl-6-methoxy-1,4-benzoquinol (DMQH2). The chain is Ubiquinone/menaquinone biosynthesis C-methyltransferase UbiE from Rhizobium etli (strain CIAT 652).